Here is a 702-residue protein sequence, read N- to C-terminus: MA3 DOMAIN-CONTAINING TRANSLATION REGULATORY FACTOR 3 (702 aa).

Positions 1 to 100 (MEGFLTDQQR…PNDPNYDSGE (100 aa)) are disordered. Positions 53–65 (VKHRRSHAGRSIR) are enriched in basic residues. Over residues 81–91 (IDTDGDYHIDP) the composition is skewed to basic and acidic residues. The 122-residue stretch at 116–237 (DYKKAAASII…PPAFLPRAAK (122 aa)) folds into the MI 1 domain. Positions 267 to 274 (ERRWGGQT) match the Nuclear localization signal 1 motif. MI domains are found at residues 280–401 (EVKK…PSGE), 414–535 (RFKE…EISS), and 577–697 (DAKD…SLTE). The Nuclear localization signal 2 motif lies at 615-622 (VKKALVMG).

The protein belongs to the PDCD4 family. Interacts with EIN2, ETR2 and EIN4. Binds to EIF4A1. The association with ribosomes is modulated by cellular energy status and TOR activity. In terms of tissue distribution, mostly expressed in vegetative tissues, such as leaves and stems, and, to a lower extent, in roots and reproductive tissues, such as flower buds and flowers. Expressed in seedlings, roots, cauline leaf tips and flowers.

It is found in the nucleus. It localises to the cytoplasm. Its subcellular location is the cytosol. Involved in target of rapamycin (TOR)-regulated translation control, especially under energy-deficient conditions. Involved in the regulation of the ethylene-mediated signaling pathway. Involved in salt stress responses. Reduced cotyledons size and early flowering. This Arabidopsis thaliana (Mouse-ear cress) protein is MA3 DOMAIN-CONTAINING TRANSLATION REGULATORY FACTOR 3.